The primary structure comprises 357 residues: UPF0283 membrane protein HSM_0945 (357 aa).

3 helical membrane-spanning segments follow: residues 67 to 87 (LMAT…QWLV), 96 to 116 (IAFV…GTII), and 213 to 233 (AVES…MFFI).

The protein belongs to the UPF0283 family.

It is found in the cell inner membrane. The protein is UPF0283 membrane protein HSM_0945 of Histophilus somni (strain 2336) (Haemophilus somnus).